A 338-amino-acid polypeptide reads, in one-letter code: Fructose-1,6-bisphosphatase class 1 (338 aa).

Glu92, Asp114, Leu116, and Asp117 together coordinate Mg(2+). Residues 117–120 (DGSS) and Asn210 each bind substrate. Glu284 lines the Mg(2+) pocket.

This sequence belongs to the FBPase class 1 family. Homotetramer. It depends on Mg(2+) as a cofactor.

It is found in the cytoplasm. It catalyses the reaction beta-D-fructose 1,6-bisphosphate + H2O = beta-D-fructose 6-phosphate + phosphate. It participates in carbohydrate biosynthesis; gluconeogenesis. The polypeptide is Fructose-1,6-bisphosphatase class 1 (Halorhodospira halophila (strain DSM 244 / SL1) (Ectothiorhodospira halophila (strain DSM 244 / SL1))).